We begin with the raw amino-acid sequence, 380 residues long: Succinyl-diaminopimelate desuccinylase (380 aa).

His69 lines the Zn(2+) pocket. Asp71 is an active-site residue. Asp102 is a Zn(2+) binding site. Glu135 serves as the catalytic Proton acceptor. Glu136, Glu164, and His353 together coordinate Zn(2+).

The protein belongs to the peptidase M20A family. DapE subfamily. In terms of assembly, homodimer. Requires Zn(2+) as cofactor. It depends on Co(2+) as a cofactor.

The catalysed reaction is N-succinyl-(2S,6S)-2,6-diaminopimelate + H2O = (2S,6S)-2,6-diaminopimelate + succinate. Its pathway is amino-acid biosynthesis; L-lysine biosynthesis via DAP pathway; LL-2,6-diaminopimelate from (S)-tetrahydrodipicolinate (succinylase route): step 3/3. In terms of biological role, catalyzes the hydrolysis of N-succinyl-L,L-diaminopimelic acid (SDAP), forming succinate and LL-2,6-diaminopimelate (DAP), an intermediate involved in the bacterial biosynthesis of lysine and meso-diaminopimelic acid, an essential component of bacterial cell walls. The protein is Succinyl-diaminopimelate desuccinylase of Phenylobacterium zucineum (strain HLK1).